A 37-amino-acid polypeptide reads, in one-letter code: Mu-cyrtautoxin-As1a (37 aa).

4 disulfides stabilise this stretch: cysteine 1–cysteine 15, cysteine 8–cysteine 19, cysteine 14–cysteine 35, and cysteine 26–cysteine 31.

This sequence belongs to the neurotoxin 13 (insecticidal toxin ABC) family. 01 (Aps III) subfamily. Expressed by the venom gland.

The protein localises to the secreted. Its function is as follows. The recombinant mu-cyrtautoxin-As1a potently and voltage-independently blocks voltage-gated sodium channels (Nav) of insects. It acts by pluging the outer vestibule of the channel. It acts in combination with a weak (30%) voltage-independent block of insect voltage-gated calcium (Cav) channels (low-voltage and high-voltage channels). Tested on DUM neurons, it inhibits sodium currents with an IC(50) of 540 nM (and a Hill coefficient &gt;1, reflecting an incomplete block at higher concentrations). In vivo, it induces flaccid paralysis in adult Australian sheep blowfly Lucilia cuprina. It is both paralytic and lethal, when injected into lepidopteran larvae. It is a slower acting toxin, being lethal at 24 hours, but not paralytic at 1 hour post-injection. The chain is Mu-cyrtautoxin-As1a from Apomastus schlingeri (Trap-door spider).